The following is a 468-amino-acid chain: Neuronal acetylcholine receptor subunit alpha-5 (468 aa).

Residues 1–22 (MATRGSGPRAPRLLLLVQLVAG) form the signal peptide. The Extracellular segment spans residues 23-254 (RCGLAGAAGG…VIKRLPLFYT (232 aa)). N-linked (GlcNAc...) asparagine glycosylation is found at asparagine 155, asparagine 183, and asparagine 229. A disulfide bridge connects residues cysteine 170 and cysteine 184. A disulfide bridge links cysteine 234 with cysteine 235. Transmembrane regions (helical) follow at residues 255–275 (LFLI…FYLP), 282–302 (ICLC…IEEI), and 317–337 (LVFT…AINI). Topologically, residues 338–429 (HHRSSSTHNA…WKFIAQVLDR (92 aa)) are cytoplasmic. Residues 430–451 (MFLWTFLFVSIVGSLGLFVPVI) form a helical membrane-spanning segment. Topologically, residues 452–468 (YKWANILIPVHIGNANK) are extracellular.

Belongs to the ligand-gated ion channel (TC 1.A.9) family. Acetylcholine receptor (TC 1.A.9.1) subfamily. Alpha-5/CHRNA5 sub-subfamily. In terms of assembly, neuronal AChR that forms heteropentamers composed of two different type of subunits: alpha and non-alpha (beta). CHRNA5/alpha-5 subunit is only able to form functional nAChRs when co-assembled with another alpha subunit, can be combined to CHRNA4/alpha-4 or CHRNA3/alpha-3 and CHRNB4/beta-4 or CHRNB2/beta-2 to give rise to functional receptors. Interacts with LYPD6.

Its subcellular location is the synaptic cell membrane. The protein localises to the cell membrane. The catalysed reaction is Ca(2+)(in) = Ca(2+)(out). It carries out the reaction K(+)(in) = K(+)(out). It catalyses the reaction Na(+)(in) = Na(+)(out). Activated by a myriad of ligands such as acetylcholine, cytisine, nicotine, choline and epibatidine. Functionally, component of neuronal acetylcholine receptors (nAChRs) that function as pentameric, ligand-gated cation channels with high calcium permeability among other activities. nAChRs are excitatory neurotrasnmitter receptors formed by a collection of nAChR subunits known to mediate synaptic transmission in the nervous system and the neuromuscular junction. Each nAchR subunit confers differential attributes to channel properties, including activation, deactivation and desensitization kinetics, pH sensitivity, cation permeability, and binding to allosteric modulators. Has an accessory rather than functional role and is only able to form functional nAChRs when co-assembled with another beta subunit. Participates in pentameric assemblies along with CHRNA3, CHRNA4, CHRNB2 and CHRNB4. Increases receptor sensitivity to acetylcholine and nicotine when associated with CHRNA4 and CHRNB2. Plays a role in nicotine addiction. The sequence is that of Neuronal acetylcholine receptor subunit alpha-5 (CHRNA5) from Pan troglodytes (Chimpanzee).